The following is a 297-amino-acid chain: Glycerol-3-phosphate dehydrogenase [NAD(P)+] (297 aa).

W11, R33, and K79 together coordinate NADPH. The sn-glycerol 3-phosphate site is built by K79, G107, and S109. Residue A111 coordinates NADPH. Sn-glycerol 3-phosphate-binding residues include K161, D214, S224, R225, and N226. Catalysis depends on K161, which acts as the Proton acceptor. R225 provides a ligand contact to NADPH. Positions 249 and 251 each coordinate NADPH.

The protein belongs to the NAD-dependent glycerol-3-phosphate dehydrogenase family.

The protein resides in the cytoplasm. The catalysed reaction is sn-glycerol 3-phosphate + NAD(+) = dihydroxyacetone phosphate + NADH + H(+). It carries out the reaction sn-glycerol 3-phosphate + NADP(+) = dihydroxyacetone phosphate + NADPH + H(+). It functions in the pathway membrane lipid metabolism; glycerophospholipid metabolism. Functionally, catalyzes the reduction of the glycolytic intermediate dihydroxyacetone phosphate (DHAP) to sn-glycerol 3-phosphate (G3P), the key precursor for phospholipid synthesis. This is Glycerol-3-phosphate dehydrogenase [NAD(P)+] from Campylobacter jejuni subsp. jejuni serotype O:2 (strain ATCC 700819 / NCTC 11168).